The following is a 288-amino-acid chain: ATP synthase gamma chain (288 aa).

Belongs to the ATPase gamma chain family. In terms of assembly, F-type ATPases have 2 components, CF(1) - the catalytic core - and CF(0) - the membrane proton channel. CF(1) has five subunits: alpha(3), beta(3), gamma(1), delta(1), epsilon(1). CF(0) has three main subunits: a, b and c.

The protein localises to the cell inner membrane. Produces ATP from ADP in the presence of a proton gradient across the membrane. The gamma chain is believed to be important in regulating ATPase activity and the flow of protons through the CF(0) complex. This chain is ATP synthase gamma chain, found in Rickettsia akari (strain Hartford).